The following is a 473-amino-acid chain: Photosystem II CP43 reaction center protein (473 aa).

Positions 1–14 are excised as a propeptide; sequence MKTLYSLRRFYPVE. The residue at position 15 (T15) is an N-acetylthreonine. T15 bears the Phosphothreonine mark. A run of 5 helical transmembrane segments spans residues 69–93, 134–155, 178–200, 255–275, and 291–312; these read LFEV…PHLA, LIGP…KDRS, KALY…RKIT, KPFA…LSYS, and WFNN…ASQA. E367 is a [CaMn4O5] cluster binding site. The helical transmembrane segment at 447–471 threads the bilayer; that stretch reads RARAAAAGFEKGIDRDFEPVLSMNP.

It belongs to the PsbB/PsbC family. PsbC subfamily. As to quaternary structure, PSII is composed of 1 copy each of membrane proteins PsbA, PsbB, PsbC, PsbD, PsbE, PsbF, PsbH, PsbI, PsbJ, PsbK, PsbL, PsbM, PsbT, PsbX, PsbY, PsbZ, Psb30/Ycf12, at least 3 peripheral proteins of the oxygen-evolving complex and a large number of cofactors. It forms dimeric complexes. Binds multiple chlorophylls and provides some of the ligands for the Ca-4Mn-5O cluster of the oxygen-evolving complex. It may also provide a ligand for a Cl- that is required for oxygen evolution. PSII binds additional chlorophylls, carotenoids and specific lipids. is required as a cofactor.

Its subcellular location is the plastid. It localises to the chloroplast thylakoid membrane. Functionally, one of the components of the core complex of photosystem II (PSII). It binds chlorophyll and helps catalyze the primary light-induced photochemical processes of PSII. PSII is a light-driven water:plastoquinone oxidoreductase, using light energy to abstract electrons from H(2)O, generating O(2) and a proton gradient subsequently used for ATP formation. This chain is Photosystem II CP43 reaction center protein, found in Cycas taitungensis (Prince sago).